Consider the following 274-residue polypeptide: Aliphatic sulfonates import ATP-binding protein SsuB 2 (274 aa).

The region spanning 21-242 is the ABC transporter domain; the sequence is LALRGVARRF…SRGSARLAAL (222 aa). 53–60 is an ATP binding site; that stretch reads GRSGCGKS.

It belongs to the ABC transporter superfamily. Aliphatic sulfonates importer (TC 3.A.1.17.2) family. As to quaternary structure, the complex is composed of two ATP-binding proteins (SsuB), two transmembrane proteins (SsuC) and a solute-binding protein (SsuA).

Its subcellular location is the cell inner membrane. The catalysed reaction is ATP + H2O + aliphatic sulfonate-[sulfonate-binding protein]Side 1 = ADP + phosphate + aliphatic sulfonateSide 2 + [sulfonate-binding protein]Side 1.. In terms of biological role, part of the ABC transporter complex SsuABC involved in aliphatic sulfonates import. Responsible for energy coupling to the transport system. The chain is Aliphatic sulfonates import ATP-binding protein SsuB 2 from Pseudomonas aeruginosa (strain UCBPP-PA14).